The following is a 293-amino-acid chain: Acetylglutamate kinase (293 aa).

Substrate contacts are provided by residues 70-71 (GG), Arg92, and Asn186.

It belongs to the acetylglutamate kinase family. ArgB subfamily.

It is found in the cytoplasm. It catalyses the reaction N-acetyl-L-glutamate + ATP = N-acetyl-L-glutamyl 5-phosphate + ADP. It functions in the pathway amino-acid biosynthesis; L-arginine biosynthesis; N(2)-acetyl-L-ornithine from L-glutamate: step 2/4. In terms of biological role, catalyzes the ATP-dependent phosphorylation of N-acetyl-L-glutamate. The polypeptide is Acetylglutamate kinase (Parasynechococcus marenigrum (strain WH8102)).